A 2021-amino-acid polypeptide reads, in one-letter code: MSSLAQQLQSIASLDAARLTSAYGAPSGKSYLFPPDVASSHDIDSIFDLAQSGFDELLSLDPEMEEFEEELFSESAKRTDRMVLSKEENDNLDRTLGRCLRRLGKWIRLMAGGKCIEWMVRRFRVHEMNVDEVLRSFLPYHESPNFPRILAIVTIPKTSPYYATFAPLVKNAQPIPRSYIVTSISPAKDKSLVLLGDIASMVQQAVKEGVVHHALLTFWTATMVDLLEGARHGKGANEGVVKQLVESFVTLLETPKAGEDVNAAVYPPLVLLTRTVPLADEPFLAIVSSLLTPGTGSNPSQRMLTLLVILNDRHTWSLGLGEHATENLAKVSQLGEILVAAMDKYRFEKALNIVVKSMLEKPDLHAKALATVLEHESLPTSVTELASTNLLQLGSSTDSQEVKAACKSLLTNLRERHPSIVDTAFLQASASLEIDTHPVDHGLVQKPSGEVAFLDVYAADISSRVTGVKSVIDMAKKGEEIESSITALEARLSDVDENVVNALYEEPKSLLEILPVEKYIAGVKPVFWAVSPISHIIGLHLDFISQHLLVSHPEAGKQIYESLLFPIFLSTEKRQPLTKSQALKLLNGGFKKLDKLSTIGPEIGKAREEGMKGAQKGNLVIAKALAGATLSSSTFEDDISFLIAQLDSTTSSARLLAYLILHSLVLTLRGPRQLSTSLSILKYLSPRLTGHSLRDLKHADENVNTEYMESVYKKPEETRTTLRAIVSILAAMGKVIKPIGQIVWLSGESKAKDASYKTFAQQIYLWANIAILPANVAHFLLRSLLTQLGEEALLFFSSIWTSSTSPVPLRISALKHALAFIHAYATLPTSPAAQGQPVDFQVVLPQILIALQDSDKDVRRVAVDVLRSVEGGEGMGDVYALDTIYGDRSEMTQLLKSVDRKKYIETLLEVAEEFVIDRLRLKAFHTEVLNMQSGKNRKESAHRRAIIGFLMSHVASYRAIDPRLVLLSLLSDVHDTSILRSAIPLLASLFDDKSEESLWLSSLPDGQQALYVQALMGSLRVQSVSVLGEAGGEGWEFLLNLLDASKSSRFIARLRILSFKAMVGGVFSALEAHQQIEYIIALIQCIHALPTDDALDAVKVLEKLDIQPRVLIELIEHLSDPLETSVNRKRQRQDAADEDRPTQAVHELITFVDSRNWPSIPASAPLVASLMSILSALLAKRLIVKEGIDYLEQEVFGAILALVERITDAQEIQRAHVGIEVVIKVIRASTNPRTAQRALLVASELARLIPDAVLHNVMPIFTFMGASDFQRDDAYTFGVVEKTVSRIVPVMTQSLKEKAQNSLELYTKSLTFLSIFTDMAGRLPRHRTLPFFVHLVKSLGASDYLAPVCMLLVDRATTKAGRNKESVSTALELPANLVAAFDVSVKTQVLGEIVQELARLIGDLSKADKEAFLSQTISENDATDRPLRQVTYLLSFLSSILGQLRGKACSQALVQSAVRQLIVLAASTSQPVMATTDIPSNLHKTLASTMLLLSADNFLGVTAELLSDGSEQDIIMSLGVFAERLPLIKSEVRLRCTKVIAEILKRIGDLLAASGATVNAALEAVKSVTKTAIAQEDGALASVLPTVVGCIGKVKDSAVIVAALSLVELLVRRLAARTIPFIQSILDTSLNLIKSTKLAATATNQAFVTLSSVIETIPTFISSKQLNAILITTIDYRRVEETNSASLFTTLAKKIRTKSLFPVLIEAWKTVQEKGGDNEMKGFFEMLRLTLKNAAREDLPSMLKPVFAFFLDVFDLRHRLQLKGVDTRVVNDVEESAIGSFLELVTKLNEPTFKPLFIRLYDWAVIDLAEGKNADDGRLTERKIVLLHVMMGLLTKFKNLLSPYMGILFPHIQELLPAFASGSVRSEPLWTLLLNVLGKSFEVDSGAFWTDALEIELLPQLVAQVPLFLPIAPSPQSPRPISSCLANLAGSTTAENVLRRLNTAVCLATRSDDPKVRLAALDALSAIWDAQAEEMVGLVPETVSEFLAELLEDESKDVEIAARGVLAKIEKVTGSLKEYLE.

5 HEAT repeats span residues 837-875 (PVDF…GEGM), 976-1014 (TSIL…YVQA), 1281-1319 (EKTV…FTDM), 1935-1973 (ENVL…AQAE), and 1977-2015 (GLVP…VTGS).

Belongs to the HEATR1/UTP10 family. Component of the ribosomal small subunit (SSU) processome.

Its subcellular location is the nucleus. It localises to the nucleolus. Involved in nucleolar processing of pre-18S ribosomal RNA. Involved in ribosome biosynthesis. The polypeptide is U3 small nucleolar RNA-associated protein 10 (UTP10) (Cryptococcus neoformans var. neoformans serotype D (strain JEC21 / ATCC MYA-565) (Filobasidiella neoformans)).